We begin with the raw amino-acid sequence, 234 residues long: MEPSKTFMRNLPITPGYSGFVPFLSCQGMSKEDDMNHCVKTFQEKTQRYKEQLRELCCAVATAPKLKPVNSEETVLQALHQYNLQYHPLILECKYVKKPLQEPPIPGWAGYLPRAKVTEFGCGTRYTVMAKNCYKDFLEITERAKKAHLKPYEEIYGVSSTKTSAPSPKVLQHEELLPKYPDFSIPDGSCPALGRPLREDPKTPLTCGCAQRPSIPCSGKMYLEPLSSAKYAEG.

In terms of assembly, microtubule inner protein component of sperm flagellar doublet microtubules. Expressed in testis (at protein level). Strongly expressed in peritubular cells and Leydig cells and weakly expressed in the cytoplasm of spermatocytes.

It is found in the cytoplasm. The protein resides in the cytoskeleton. Its subcellular location is the flagellum axoneme. The protein localises to the nucleus. Its function is as follows. Microtubule inner protein (MIP) part of the dynein-decorated doublet microtubules (DMTs) in flagellum axoneme. May serve to reinforce and thus stabilize the microtubule structure in the sperm flagella. In Homo sapiens (Human), this protein is Sperm-associated microtubule inner protein 5.